A 374-amino-acid chain; its full sequence is NAD-capped RNA hydrolase ndx-9 (374 aa).

4 residues coordinate Zn(2+): C181, C184, C199, and C202. Substrate-binding positions include Y207, 243-245 (AGF), E259, E263, and E307. The Nudix hydrolase domain maps to 208-336 (PTFSPVSITL…LADPLLKNLP (129 aa)). Mg(2+) contacts are provided by A243, E259, E263, and E307. The Nudix box motif lies at 244–265 (GFAHSGESMAECARREIAEEVG). The Microbody targeting signal motif lies at 367–369 (LEN).

Belongs to the Nudix hydrolase family. NudC subfamily. In terms of assembly, homodimer. Mg(2+) is required as a cofactor. Mn(2+) serves as cofactor. The cofactor is Zn(2+).

It catalyses the reaction a 5'-end NAD(+)-phospho-ribonucleoside in mRNA + H2O = a 5'-end phospho-adenosine-phospho-ribonucleoside in mRNA + beta-nicotinamide D-ribonucleotide + 2 H(+). The catalysed reaction is NAD(+) + H2O = beta-nicotinamide D-ribonucleotide + AMP + 2 H(+). It carries out the reaction NADH + H2O = reduced beta-nicotinamide D-ribonucleotide + AMP + 2 H(+). Functionally, mRNA decapping enzyme that specifically removes the nicotinamide adenine dinucleotide (NAD) cap from a subset of mRNAs by hydrolyzing the diphosphate linkage to produce nicotinamide mononucleotide (NMN) and 5' monophosphate mRNA. The NAD-cap is present at the 5'-end of some RNAs; in contrast to the canonical N7 methylguanosine (m7G) cap, the NAD cap promotes mRNA decay. Mediates the hydrolysis of some nucleoside diphosphate derivatives. This is NAD-capped RNA hydrolase ndx-9 (ndx-9) from Caenorhabditis elegans.